A 274-amino-acid chain; its full sequence is 3-methyl-2-oxobutanoate hydroxymethyltransferase (274 aa).

Residues D49 and D88 each contribute to the Mg(2+) site. 3-methyl-2-oxobutanoate contacts are provided by residues 49–50, D88, and K118; that span reads DS. E120 contacts Mg(2+). Catalysis depends on E187, which acts as the Proton acceptor.

It belongs to the PanB family. As to quaternary structure, homodecamer; pentamer of dimers. Mg(2+) is required as a cofactor.

Its subcellular location is the cytoplasm. It catalyses the reaction 3-methyl-2-oxobutanoate + (6R)-5,10-methylene-5,6,7,8-tetrahydrofolate + H2O = 2-dehydropantoate + (6S)-5,6,7,8-tetrahydrofolate. Its pathway is cofactor biosynthesis; (R)-pantothenate biosynthesis; (R)-pantoate from 3-methyl-2-oxobutanoate: step 1/2. In terms of biological role, catalyzes the reversible reaction in which hydroxymethyl group from 5,10-methylenetetrahydrofolate is transferred onto alpha-ketoisovalerate to form ketopantoate. This is 3-methyl-2-oxobutanoate hydroxymethyltransferase from Paramagnetospirillum magneticum (strain ATCC 700264 / AMB-1) (Magnetospirillum magneticum).